Consider the following 413-residue polypeptide: Eukaryotic initiation factor 4A-7 (413 aa).

The Q motif motif lies at D40–Q68. In terms of domain architecture, Helicase ATP-binding spans I71–I241. ATP is bound at residue A84–T91. The short motif at D189–D192 is the DEAD box element. Positions G252–L413 constitute a Helicase C-terminal domain.

The protein belongs to the DEAD box helicase family. eIF4A subfamily. EIF4F is a multi-subunit complex, the composition of which varies with external and internal environmental conditions. It is composed of at least EIF4A, EIF4E and EIF4G.

It carries out the reaction ATP + H2O = ADP + phosphate + H(+). ATP-dependent RNA helicase which is a subunit of the eIF4F complex involved in cap recognition and is required for mRNA binding to ribosome. In the current model of translation initiation, eIF4A unwinds RNA secondary structures in the 5'-UTR of mRNAs which is necessary to allow efficient binding of the small ribosomal subunit, and subsequent scanning for the initiator codon. The polypeptide is Eukaryotic initiation factor 4A-7 (Nicotiana tabacum (Common tobacco)).